The chain runs to 320 residues: Ferrochelatase (320 aa).

His194 and Glu275 together coordinate Fe cation.

The protein belongs to the ferrochelatase family. In terms of assembly, monomer.

It is found in the cytoplasm. The enzyme catalyses heme b + 2 H(+) = protoporphyrin IX + Fe(2+). It participates in porphyrin-containing compound metabolism; protoheme biosynthesis; protoheme from protoporphyrin-IX: step 1/1. Functionally, catalyzes the ferrous insertion into protoporphyrin IX. The polypeptide is Ferrochelatase (Shigella boydii serotype 18 (strain CDC 3083-94 / BS512)).